A 310-amino-acid chain; its full sequence is ATP-dependent protease (310 aa).

Residues 24 to 186 (RLNQCFFKFK…TPNQKEENYF (163 aa)) form the Integrase catalytic domain.

This Lactococcus lactis subsp. lactis (Streptococcus lactis) protein is ATP-dependent protease.